The primary structure comprises 468 residues: Glutamate--tRNA ligase (468 aa).

A 'HIGH' region motif is present at residues 11 to 21 (PSPTGFIHLGN). The 'KMSKS' region signature appears at 243-247 (KMSKR). Position 246 (Lys-246) interacts with ATP.

Belongs to the class-I aminoacyl-tRNA synthetase family. Glutamate--tRNA ligase type 1 subfamily. As to quaternary structure, monomer.

The protein localises to the cytoplasm. It carries out the reaction tRNA(Glu) + L-glutamate + ATP = L-glutamyl-tRNA(Glu) + AMP + diphosphate. Its function is as follows. Catalyzes the attachment of glutamate to tRNA(Glu) in a two-step reaction: glutamate is first activated by ATP to form Glu-AMP and then transferred to the acceptor end of tRNA(Glu). In Delftia acidovorans (strain DSM 14801 / SPH-1), this protein is Glutamate--tRNA ligase.